A 348-amino-acid polypeptide reads, in one-letter code: Peroxidase 40 (348 aa).

The N-terminal stretch at 1 to 21 (MKNLFNLFLMFFFAMPILSLS) is a signal peptide. N26 carries N-linked (GlcNAc...) asparagine glycosylation. 4 disulfides stabilise this stretch: C59–C139, C92–C97, C145–C344, and C224–C256. Catalysis depends on H90, which acts as the Proton acceptor. Residues D91, V94, G96, D98, and S100 each coordinate Ca(2+). The disordered stretch occupies residues 170-189 (GRKDSRTASKQAATNGLPSP). Residues 177 to 189 (ASKQAATNGLPSP) show a composition bias toward polar residues. P187 serves as a coordination point for substrate. An N-linked (GlcNAc...) asparagine glycan is attached at N190. H217 is a heme b binding site. T218 provides a ligand contact to Ca(2+). Ca(2+)-binding residues include D269, T272, and D277.

Belongs to the peroxidase family. Classical plant (class III) peroxidase subfamily. Requires heme b as cofactor. It depends on Ca(2+) as a cofactor.

It localises to the secreted. It carries out the reaction 2 a phenolic donor + H2O2 = 2 a phenolic radical donor + 2 H2O. Functionally, removal of H(2)O(2), oxidation of toxic reductants, biosynthesis and degradation of lignin, suberization, auxin catabolism, response to environmental stresses such as wounding, pathogen attack and oxidative stress. These functions might be dependent on each isozyme/isoform in each plant tissue. The sequence is that of Peroxidase 40 (PER40) from Arabidopsis thaliana (Mouse-ear cress).